The primary structure comprises 964 residues: Translation initiation factor IF-2 (964 aa).

The disordered stretch occupies residues 26–375 (AAGVSKRSPE…QNNQHAFQAP (350 aa)). 7 stretches are compositionally biased toward basic and acidic residues: residues 49-60 (YLKRSHGAREDS), 91-103 (VRPDDAPRAEAPK), 118-154 (AKPEPKPEPKVEAKPEPKPEPKPEPKVEAKPEPKPEP), 174-206 (IAAREAEEKRQAAFRARQEALMREKIEREERRQ), 225-236 (PQREERRDDRRG), 243-252 (RGPRGNDNRG), and 328-339 (KGGERSWDDNKK). Residues 464–633 (PRSPVVTVMG…LLQAEVLELK (170 aa)) form the tr-type G domain. Positions 473-480 (GHVDHGKT) are G1. Residue 473–480 (GHVDHGKT) participates in GTP binding. The tract at residues 498–502 (GITQH) is G2. The tract at residues 519-522 (DTPG) is G3. GTP-binding positions include 519-523 (DTPGH) and 573-576 (NKID). Residues 573–576 (NKID) are G4. Positions 609–611 (SAK) are G5.

It belongs to the TRAFAC class translation factor GTPase superfamily. Classic translation factor GTPase family. IF-2 subfamily.

The protein localises to the cytoplasm. In terms of biological role, one of the essential components for the initiation of protein synthesis. Protects formylmethionyl-tRNA from spontaneous hydrolysis and promotes its binding to the 30S ribosomal subunits. Also involved in the hydrolysis of GTP during the formation of the 70S ribosomal complex. This is Translation initiation factor IF-2 from Chromobacterium violaceum (strain ATCC 12472 / DSM 30191 / JCM 1249 / CCUG 213 / NBRC 12614 / NCIMB 9131 / NCTC 9757 / MK).